A 487-amino-acid polypeptide reads, in one-letter code: UDP-N-acetylmuramoyl-L-alanyl-D-glutamate--2,6-diaminopimelate ligase (487 aa).

UDP-N-acetyl-alpha-D-muramoyl-L-alanyl-D-glutamate-binding residues include Leu-23 and Ser-25. An ATP-binding site is contributed by 108-114 (GTNGKTS). UDP-N-acetyl-alpha-D-muramoyl-L-alanyl-D-glutamate contacts are provided by residues 150-151 (TT), Ser-177, Gln-183, and Arg-185. Lys-217 carries the N6-carboxylysine modification. Meso-2,6-diaminopimelate is bound by residues Arg-378, 402 to 405 (DNPR), Gly-453, and Glu-457. A Meso-diaminopimelate recognition motif motif is present at residues 402-405 (DNPR).

It belongs to the MurCDEF family. MurE subfamily. It depends on Mg(2+) as a cofactor. In terms of processing, carboxylation is probably crucial for Mg(2+) binding and, consequently, for the gamma-phosphate positioning of ATP.

The protein resides in the cytoplasm. It catalyses the reaction UDP-N-acetyl-alpha-D-muramoyl-L-alanyl-D-glutamate + meso-2,6-diaminopimelate + ATP = UDP-N-acetyl-alpha-D-muramoyl-L-alanyl-gamma-D-glutamyl-meso-2,6-diaminopimelate + ADP + phosphate + H(+). The protein operates within cell wall biogenesis; peptidoglycan biosynthesis. Functionally, catalyzes the addition of meso-diaminopimelic acid to the nucleotide precursor UDP-N-acetylmuramoyl-L-alanyl-D-glutamate (UMAG) in the biosynthesis of bacterial cell-wall peptidoglycan. This is UDP-N-acetylmuramoyl-L-alanyl-D-glutamate--2,6-diaminopimelate ligase from Pseudomonas syringae pv. tomato (strain ATCC BAA-871 / DC3000).